The chain runs to 667 residues: Receptor for retinol uptake STRA6 (667 aa).

Over residues 1–13 the composition is skewed to polar residues; it reads MSSQPAGNQTSPG. Residues 1–22 form a disordered region; the sequence is MSSQPAGNQTSPGPTEDYSYGS. Residues 1 to 50 lie on the Extracellular side of the membrane; that stretch reads MSSQPAGNQTSPGPTEDYSYGSWYIDEPQGGEELQPEGEVPSCHTSIPPS. N-linked (GlcNAc...) asparagine glycosylation is present at asparagine 8. A helical transmembrane segment spans residues 51-71; the sequence is LYHACLASLSILVLLLLAMLV. Topologically, residues 72-98 are cytoplasmic; it reads RRRQLWPDCVRGRPGLPSPVDFLAGDR. Residues 99 to 119 traverse the membrane as a helical segment; sequence PQAVPAAVFVVLFSSLCLLLP. At 120-144 the chain is on the extracellular side; the sequence is DEDPLPFLTLASAPSQDGKTEAPRG. Residues 145–165 form a helical membrane-spanning segment; that stretch reads AWKILGLFYYAALCYPLAACA. The Cytoplasmic portion of the chain corresponds to 166–168; that stretch reads TAG. The helical transmembrane segment at 169–189 threads the bilayer; it reads HTAAHLLGSTLSWAHLGVQVW. Topologically, residues 190 to 205 are extracellular; sequence QRAECPQVPKIYKYYS. A helical membrane pass occupies residues 206-226; it reads LLASLPLLLGLGFLSLWYPVQ. Topologically, residues 227-295 are cytoplasmic; it reads LVRSFSCRTG…PQPGFRLPLK (69 aa). The interaction with RBP1 stretch occupies residues 235–293; the sequence is TGAGSKGLQSSYSEEYLRNLLCRKKLGSSSHTSKHGFLSWAWVCLRHCIYTPQPGFRLP. The chain crosses the membrane as a helical span at residues 296–316; it reads LVLSATLTGTAIYQVALLLLV. Residues 317–367 lie on the Extracellular side of the membrane; that stretch reads GMVPNIQKVRAGVTTDVSYLLAGFGIVLSEDKQEVVELVKHHLWALEVCYI. Residues 368-388 form a helical membrane-spanning segment; the sequence is SALVLSCSLTFLVLMRSLVTH. The Cytoplasmic segment spans residues 389–422; that stretch reads RTNLRALHRGAALDSSPLHRSPHPSRRAIFCWMS. Residues 423 to 443 traverse the membrane as a helical segment; the sequence is FSAYQTAFICLGLLVQQIIFF. Residues 444-473 lie on the Extracellular side of the membrane; the sequence is LGTTALAFLVLMPVLHGRNLLLFRSLESSW. The chain crosses the membrane as a helical span at residues 474–494; that stretch reads PFWLTLALAVILQSMAAHWVF. Topologically, residues 495–509 are cytoplasmic; the sequence is LETHDGHPQLTNRRV. The helical intramembrane region spans 510–547; sequence LYAATFLLFPLNVLVGAMVATWRVLLSALYNAIHLGQM. Over 548 to 667 the chain is Cytoplasmic; it reads DLSLLPPRAA…ALLGANGAQP (120 aa). A Phosphotyrosine modification is found at tyrosine 643.

As to quaternary structure, homodimer. Interacts with JAK2 and STAT5. Interacts (via extracellular domains) with RBP4. Interacts (via cytoplasmic domains) with RBP1. Post-translationally, phosphorylated on tyrosine residues in response to RBP4 binding. Phosphorylation requires the presence of LRAT, suggesting it may be triggered by the uptake of retinol that is then metabolized within the cell to retinoids that function as signaling molecules.

The protein localises to the cell membrane. In terms of biological role, functions as a retinol transporter. Accepts all-trans retinol from the extracellular retinol-binding protein RBP4, facilitates retinol transport across the cell membrane, and then transfers retinol to the cytoplasmic retinol-binding protein RBP1. Retinol uptake is enhanced by LRAT, an enzyme that converts retinol to all-trans retinyl esters, the storage forms of vitamin A. Contributes to the activation of a signaling cascade that depends on retinol transport and LRAT-dependent generation of retinol metabolites that then trigger activation of JAK2 and its target STAT5, and ultimately increase the expression of SOCS3 and inhibit cellular responses to insulin. Important for the homeostasis of vitamin A and its derivatives, such as retinoic acid. STRA6-mediated transport is particularly important in the eye, and under conditions of dietary vitamin A deficiency. Does not transport retinoic acid. In Pongo abelii (Sumatran orangutan), this protein is Receptor for retinol uptake STRA6 (STRA6).